A 1028-amino-acid chain; its full sequence is Formate dehydrogenase major subunit (1028 aa).

A signal peptide (tat-type signal) is located at residues 1-33 (MQVSRRKFFKICAGGMAGTSAAMLGFAPANVLA). The region spanning 43–114 (AFESRNTCTY…GSLDYVNSES (72 aa)) is the 4Fe-4S Mo/W bis-MGD-type domain. [4Fe-4S] cluster contacts are provided by Cys50, Cys53, Cys57, and Cys100. Sec204 is a non-standard amino acid (selenocysteine).

It belongs to the prokaryotic molybdopterin-containing oxidoreductase family. Formate dehydrogenase is a membrane-bound complex, formed by subunits alpha, beta and gamma. Requires Mo-bis(molybdopterin guanine dinucleotide) as cofactor. The cofactor is [4Fe-4S] cluster. Post-translationally, predicted to be exported by the Tat system. The position of the signal peptide cleavage has not been experimentally proven.

The protein localises to the periplasm. The enzyme catalyses formate + NAD(+) = CO2 + NADH. Functionally, allows to use formate as major electron donor during anaerobic respiration. Subunit alpha possibly forms the active site. In Haemophilus influenzae (strain ATCC 51907 / DSM 11121 / KW20 / Rd), this protein is Formate dehydrogenase major subunit (fdxG).